The primary structure comprises 228 residues: MSADVVVAIDGPAGTGKSSVSKGLARALGARYLDTGGMYRMVTLAVLRAGIDPADADAVGRAAQAVRMSVDYHPDGDRYFLGGEDVSTEIRGDKVTAAVSAVSSIPAVRTRLVGLQREMASGPGSIVVEGRDIGTVVLPDAPVKIFLTASAETRARRRNDQNVAAGLADDYEAVLAEVRRRDHLDSTRRVSPLRAAPDAVVVDTSDMTEAQVIDHLRDLVRQRSEVAR.

11–19 (GPAGTGKSS) lines the ATP pocket.

This sequence belongs to the cytidylate kinase family. Type 1 subfamily.

It is found in the cytoplasm. The catalysed reaction is CMP + ATP = CDP + ADP. The enzyme catalyses dCMP + ATP = dCDP + ADP. The sequence is that of Cytidylate kinase from Mycobacterium avium (strain 104).